Reading from the N-terminus, the 324-residue chain is Cuticle collagen sqt-1 (324 aa).

Disordered stretches follow at residues 68–108 (RRQY…TPNG) and 129–324 (SGPK…YRNI). The span at 87 to 97 (SAPPGQPPAVP) shows a compositional bias: pro residues. Triple-helical region stretches follow at residues 127–153 (GPSGPKGVPGVPGLDGVPGLDGVPGVG), 171–231 (QGPV…KGRD), and 237–299 (GRPG…PGKD). Composition is skewed to low complexity over residues 129 to 156 (SGPKGVPGVPGLDGVPGLDGVPGVGADD) and 177 to 201 (PGALGRPGPRGLPGPRGQNGNPGRD). The segment covering 227–236 (EKGRDAEHPI) has biased composition (basic and acidic residues).

It belongs to the cuticular collagen family. Collagen polypeptide chains are complexed within the cuticle by disulfide bonds and other types of covalent cross-links.

Its function is as follows. Nematode cuticles are composed largely of collagen-like proteins. The cuticle functions both as an exoskeleton and as a barrier to protect the worm from its environment. This is a collagen critical for organismal morphogenesis. Mutations in sqt-1 can lengthen, shorten, or helically twist the entire animal. The polypeptide is Cuticle collagen sqt-1 (sqt-1) (Caenorhabditis elegans).